The following is an 89-amino-acid chain: Small ribosomal subunit protein uS15 (89 aa).

Belongs to the universal ribosomal protein uS15 family. Part of the 30S ribosomal subunit. Forms a bridge to the 50S subunit in the 70S ribosome, contacting the 23S rRNA.

Its function is as follows. One of the primary rRNA binding proteins, it binds directly to 16S rRNA where it helps nucleate assembly of the platform of the 30S subunit by binding and bridging several RNA helices of the 16S rRNA. Forms an intersubunit bridge (bridge B4) with the 23S rRNA of the 50S subunit in the ribosome. This Nitrosospira multiformis (strain ATCC 25196 / NCIMB 11849 / C 71) protein is Small ribosomal subunit protein uS15.